Reading from the N-terminus, the 510-residue chain is Bifunctional purine biosynthesis protein PurH (510 aa).

One can recognise an MGS-like domain in the interval 1 to 142; sequence MRALLSVSDK…KNYKDVMVLC (142 aa).

Belongs to the PurH family.

It carries out the reaction (6R)-10-formyltetrahydrofolate + 5-amino-1-(5-phospho-beta-D-ribosyl)imidazole-4-carboxamide = 5-formamido-1-(5-phospho-D-ribosyl)imidazole-4-carboxamide + (6S)-5,6,7,8-tetrahydrofolate. The catalysed reaction is IMP + H2O = 5-formamido-1-(5-phospho-D-ribosyl)imidazole-4-carboxamide. It participates in purine metabolism; IMP biosynthesis via de novo pathway; 5-formamido-1-(5-phospho-D-ribosyl)imidazole-4-carboxamide from 5-amino-1-(5-phospho-D-ribosyl)imidazole-4-carboxamide (10-formyl THF route): step 1/1. Its pathway is purine metabolism; IMP biosynthesis via de novo pathway; IMP from 5-formamido-1-(5-phospho-D-ribosyl)imidazole-4-carboxamide: step 1/1. This is Bifunctional purine biosynthesis protein PurH from Campylobacter jejuni subsp. doylei (strain ATCC BAA-1458 / RM4099 / 269.97).